The chain runs to 59 residues: Amyloid-beta precursor protein (59 aa).

Over 1-34 (ISEVKMDAEFRHDSGYEVHHQKLVFFAEDVGSNK) the chain is Extracellular. A helical transmembrane segment spans residues 35–58 (GAIIGLMVGGVVIATVIVITLVML). A topological domain (cytoplasmic) is located at residue Lys-59.

The protein belongs to the APP family. As to quaternary structure, binds, via its C-terminus, to the PID domain of several cytoplasmic proteins, including APBB family members, the APBA family, MAPK8IP1, SHC1 and NUMB and DAB1. Binding to DAB1 inhibits its serine phosphorylation. Interacts (via NPXY motif) with DAB2 (via PID domain); the interaction is impaired by tyrosine phosphorylation of the NPXY motif. Also interacts with GPCR-like protein BPP, APPBP1, IB1, KNS2 (via its TPR domains), APPBP2 (via BaSS) and DDB1. In vitro, it binds MAPT via the MT-binding domains. Associates with microtubules in the presence of ATP and in a kinesin-dependent manner. Interacts, through a C-terminal domain, with GNAO1. Interacts with CPEB1, ANKS1B and AGER. Interacts with ITM2B. Interacts with ITM2C. Interacts with IDE. Can form homodimers; dimerization is enhanced in the presence of Cu(2+) ions. Can form homodimers; this is promoted by heparin binding. Interacts with SORL1 (via N-terminal ectodomain); this interaction retains APP in the trans-Golgi network and reduces processing into soluble APP-alpha and amyloid-beta peptides. Interacts with PLD3. Interacts with VDAC1. Interacts with NSG1; could regulate APP processing. Amyloid-beta protein 42 interacts with FPR2. Interacts with LRRK2. Interacts (via cytoplasmic domain) with KIF5B. Interacts (via C-terminus) with APBB2/FE65L1 (via C-terminus). Interacts (via intracellular domain) with APBB3. Proteolytically processed under normal cellular conditions. Cleavage either by alpha-secretase, beta-secretase or theta-secretase leads to generation and extracellular release of soluble APP peptides, S-APP-alpha and S-APP-beta, and the retention of corresponding membrane-anchored C-terminal fragments, C80, C83 and C99. Subsequent processing of C80 and C83 by gamma-secretase yields P3 peptides. This is the major secretory pathway and is non-amyloidogenic. Alternatively, presenilin/nicastrin-mediated gamma-secretase processing of C99 releases the amyloid-beta proteins, amyloid-beta protein 40 and amyloid-beta protein 42, major components of amyloid plaques, and the cytotoxic C-terminal fragments, gamma-CTF(50), gamma-CTF(57) and gamma-CTF(59). PSEN1 cleavage is more efficient with C83 than with C99 as substrate (in vitro). Amyloid-beta protein 40 and Amyloid-beta protein 42 are cleaved by ACE. Many other minor amyloid-beta peptides, amyloid-beta 1-X peptides, are found in cerebral spinal fluid (CSF) including the amyloid-beta X-15 peptides, produced from the cleavage by alpha-secretase.

The protein localises to the cell membrane. It localises to the membrane. It is found in the perikaryon. The protein resides in the cell projection. Its subcellular location is the growth cone. The protein localises to the clathrin-coated pit. It localises to the early endosome. It is found in the cytoplasmic vesicle. The protein resides in the secreted. Its subcellular location is the cell surface. The protein localises to the nucleus. It localises to the cytoplasm. Functionally, functions as a cell surface receptor and performs physiological functions on the surface of neurons relevant to neurite growth, neuronal adhesion and axonogenesis. Interaction between APP molecules on neighboring cells promotes synaptogenesis. Involved in cell mobility and transcription regulation through protein-protein interactions. Can promote transcription activation through binding to APBB1-KAT5 and inhibit Notch signaling through interaction with Numb. Couples to apoptosis-inducing pathways such as those mediated by G(o) and JIP. Inhibits G(o)-alpha ATPase activity. Acts as a kinesin I membrane receptor, mediating the axonal transport of beta-secretase and presenilin 1. By acting as a kinesin I membrane receptor, plays a role in axonal anterograde transport of cargo towards synapses in axons. May be involved in copper homeostasis/oxidative stress through copper ion reduction. In vitro, copper-metallated APP induces neuronal death directly or is potentiated through Cu(2+)-mediated low-density lipoprotein oxidation. Can regulate neurite outgrowth through binding to components of the extracellular matrix such as heparin and collagen I and IV. Induces a AGER-dependent pathway that involves activation of p38 MAPK, resulting in internalization of amyloid-beta peptide and mitochondrial dysfunction in cultured cortical neurons. Provides Cu(2+) ions for GPC1 which are required for release of nitric oxide (NO) and subsequent degradation of the heparan sulfate chains on GPC1. The polypeptide is Amyloid-beta precursor protein (APP) (Bos taurus (Bovine)).